A 330-amino-acid polypeptide reads, in one-letter code: Aspartate--ammonia ligase (330 aa).

It belongs to the class-II aminoacyl-tRNA synthetase family. AsnA subfamily.

The protein resides in the cytoplasm. It carries out the reaction L-aspartate + NH4(+) + ATP = L-asparagine + AMP + diphosphate + H(+). Its pathway is amino-acid biosynthesis; L-asparagine biosynthesis; L-asparagine from L-aspartate (ammonia route): step 1/1. The sequence is that of Aspartate--ammonia ligase from Streptococcus pyogenes serotype M49 (strain NZ131).